The following is a 555-amino-acid chain: Urocanate hydratase (555 aa).

NAD(+)-binding positions include 51 to 52, Gln-129, 175 to 177, Glu-195, 262 to 266, 272 to 273, and Tyr-321; these read GG, GMG, QTSAH, and YL. Residue Cys-409 is part of the active site. Gly-491 lines the NAD(+) pocket.

Belongs to the urocanase family. NAD(+) is required as a cofactor.

It is found in the cytoplasm. It catalyses the reaction 4-imidazolone-5-propanoate = trans-urocanate + H2O. It participates in amino-acid degradation; L-histidine degradation into L-glutamate; N-formimidoyl-L-glutamate from L-histidine: step 2/3. In terms of biological role, catalyzes the conversion of urocanate to 4-imidazolone-5-propionate. The sequence is that of Urocanate hydratase from Xanthomonas euvesicatoria pv. vesicatoria (strain 85-10) (Xanthomonas campestris pv. vesicatoria).